Consider the following 126-residue polypeptide: Large ribosomal subunit protein uL22 (126 aa).

Belongs to the universal ribosomal protein uL22 family. Part of the 50S ribosomal subunit.

In terms of biological role, this protein binds specifically to 23S rRNA; its binding is stimulated by other ribosomal proteins, e.g. L4, L17, and L20. It is important during the early stages of 50S assembly. It makes multiple contacts with different domains of the 23S rRNA in the assembled 50S subunit and ribosome. The globular domain of the protein is located near the polypeptide exit tunnel on the outside of the subunit, while an extended beta-hairpin is found that lines the wall of the exit tunnel in the center of the 70S ribosome. This chain is Large ribosomal subunit protein uL22, found in Rhodospirillum rubrum (strain ATCC 11170 / ATH 1.1.1 / DSM 467 / LMG 4362 / NCIMB 8255 / S1).